A 342-amino-acid polypeptide reads, in one-letter code: Isopentenyl-diphosphate delta-isomerase (342 aa).

11–12 is a binding site for substrate; that stretch reads RK. Residues Ser68, 69 to 71, Ser99, and Asn127 each bind FMN; that span reads SMT. Substrate is bound at residue 99–101; it reads SMR. Substrate is bound at residue Gln162. Position 163 (Glu163) interacts with Mg(2+). FMN is bound by residues Lys194, Thr224, 274–276, and 295–296; these read GLK and AG.

It belongs to the IPP isomerase type 2 family. In terms of assembly, homooctamer. Dimer of tetramers. FMN is required as a cofactor. NADPH serves as cofactor. The cofactor is Mg(2+).

The protein resides in the cytoplasm. The enzyme catalyses isopentenyl diphosphate = dimethylallyl diphosphate. In terms of biological role, involved in the biosynthesis of isoprenoids. Catalyzes the 1,3-allylic rearrangement of the homoallylic substrate isopentenyl (IPP) to its allylic isomer, dimethylallyl diphosphate (DMAPP). This chain is Isopentenyl-diphosphate delta-isomerase, found in Rickettsia peacockii (strain Rustic).